Here is a 116-residue protein sequence, read N- to C-terminus: Iron-sulfur cluster insertion protein ErpA (116 aa).

Cysteine 44, cysteine 108, and cysteine 110 together coordinate iron-sulfur cluster.

This sequence belongs to the HesB/IscA family. As to quaternary structure, homodimer. Requires iron-sulfur cluster as cofactor.

In terms of biological role, required for insertion of 4Fe-4S clusters for at least IspG. The sequence is that of Iron-sulfur cluster insertion protein ErpA from Francisella philomiragia subsp. philomiragia (strain ATCC 25017 / CCUG 19701 / FSC 153 / O#319-036).